Reading from the N-terminus, the 153-residue chain is SsrA-binding protein (153 aa).

Basic and acidic residues predominate over residues 132–142; that stretch reads ALKRKEAEREA. Residues 132–153 form a disordered region; it reads ALKRKEAEREAQSAMKRYAKGY.

The protein belongs to the SmpB family.

Its subcellular location is the cytoplasm. Its function is as follows. Required for rescue of stalled ribosomes mediated by trans-translation. Binds to transfer-messenger RNA (tmRNA), required for stable association of tmRNA with ribosomes. tmRNA and SmpB together mimic tRNA shape, replacing the anticodon stem-loop with SmpB. tmRNA is encoded by the ssrA gene; the 2 termini fold to resemble tRNA(Ala) and it encodes a 'tag peptide', a short internal open reading frame. During trans-translation Ala-aminoacylated tmRNA acts like a tRNA, entering the A-site of stalled ribosomes, displacing the stalled mRNA. The ribosome then switches to translate the ORF on the tmRNA; the nascent peptide is terminated with the 'tag peptide' encoded by the tmRNA and targeted for degradation. The ribosome is freed to recommence translation, which seems to be the essential function of trans-translation. The polypeptide is SsrA-binding protein (Campylobacter hominis (strain ATCC BAA-381 / DSM 21671 / CCUG 45161 / LMG 19568 / NCTC 13146 / CH001A)).